Here is a 473-residue protein sequence, read N- to C-terminus: MTNQQEQHIAIFTTASIPWLTGTAVNPLFRAAYLANDGERRVTLVIPWLTLKHQKLVYPNSITFSSPSEQEAYVRQWLEERVSFRLAFEIRFYPGKFAIDKRSILPVGDISDAIPDEEADIAVLEEPEHLTWFHHGQKWKTKFNYVIGIVHTNYLEYVKREKQGRVKAFFLKYLNSWVVGIYCHKVIRLSAATQEYPKSIVCNVHGVNPKFLEIGLRKLEQQKLQEQPFTKGAYYIGKMVWSKGYKELLKLLEKHQKELAELEVDLYGDGEDSEEIKEAARKLDLTVNVYPGRDHADSLFHNYKVFLNPSTTDVVCTTTAEALAMGKIVVCANHISNKFFKQFPNCRTYDDGQGFVRATLKALGEQPSQLTEQQRHELSWEAATQRFIKVSDLNRLSRADSNLSKRSVFASSSISVGKNLEDMSAYIHFLASGFEASRTAFGAIPGSLQPDEELCRDLGLSLNTPSPNTRKQD.

Interaction with the membrane lipid bilayer stretches follow at residues 130 to 148 and 227 to 245; these read LTWF…YVIG and QPFT…SKGY.

The protein belongs to the glycosyltransferase group 1 family. Glycosyltransferase 4 subfamily. Expressed in leaves, flowers and roots, but not in stems and siliques.

The protein localises to the plastid. Its subcellular location is the chloroplast outer membrane. It catalyses the reaction a 1,2-diacyl-3-O-(beta-D-galactosyl)-sn-glycerol + UDP-alpha-D-galactose = a 1,2-diacyl-3-O-[alpha-D-galactosyl-(1-&gt;6)-beta-D-galactosyl]-sn-glycerol + UDP + H(+). With respect to regulation, stimulated by anionic phospholipids. In terms of biological role, involved in the synthesis of diacylglycerol galactolipids that are specifically found in thylakoid membranes. Specific for alpha-glycosidic linkages. During phosphate shortage, involved in the biosynthesis of digalactosyldiacylglycerol (DGDG) which rescues the limitation of phospholipids. This chain is Digalactosyldiacylglycerol synthase 2, chloroplastic, found in Arabidopsis thaliana (Mouse-ear cress).